The following is a 359-amino-acid chain: Fructose-like permease IIC component 2 (359 aa).

The PTS EIIC type-2 domain occupies 11-344 (TRQHLMTGVS…KSLARKNGSS (334 aa)). Helical transmembrane passes span 19 to 39 (VSHMIPFVVSGGILLAVSVML), 60 to 80 (IGVAGLTLMVPFLAAYIGYSI), 99 to 119 (FGAGFFGALIAGIIGGIVVHY), 135 to 155 (IFIIPIVGTLITAGIMMWGLG), 176 to 196 (SIVMLAVIMGLMLAFDMGGPV), 216 to 236 (VAIAAVGICIPPLGMGLATLI), 251 to 271 (AALVMGCVGVTEGAIPFAAAD), 290 to 310 (AALVGAQCYAGWGGLIVLPVV), and 314 to 334 (LGYIAAVAVGAVVTAVCVNVL).

It is found in the cell inner membrane. Its function is as follows. The phosphoenolpyruvate-dependent sugar phosphotransferase system (PTS), a major carbohydrate active -transport system, catalyzes the phosphorylation of incoming sugar substrates concomitant with their translocation across the cell membrane. This chain is Fructose-like permease IIC component 2 (frwC), found in Escherichia coli (strain K12).